The following is a 479-amino-acid chain: Aspartyl/glutamyl-tRNA(Asn/Gln) amidotransferase subunit B (479 aa).

It belongs to the GatB/GatE family. GatB subfamily. In terms of assembly, heterotrimer of A, B and C subunits.

The enzyme catalyses L-glutamyl-tRNA(Gln) + L-glutamine + ATP + H2O = L-glutaminyl-tRNA(Gln) + L-glutamate + ADP + phosphate + H(+). It carries out the reaction L-aspartyl-tRNA(Asn) + L-glutamine + ATP + H2O = L-asparaginyl-tRNA(Asn) + L-glutamate + ADP + phosphate + 2 H(+). In terms of biological role, allows the formation of correctly charged Asn-tRNA(Asn) or Gln-tRNA(Gln) through the transamidation of misacylated Asp-tRNA(Asn) or Glu-tRNA(Gln) in organisms which lack either or both of asparaginyl-tRNA or glutaminyl-tRNA synthetases. The reaction takes place in the presence of glutamine and ATP through an activated phospho-Asp-tRNA(Asn) or phospho-Glu-tRNA(Gln). The chain is Aspartyl/glutamyl-tRNA(Asn/Gln) amidotransferase subunit B from Geobacter sulfurreducens (strain ATCC 51573 / DSM 12127 / PCA).